The following is a 257-amino-acid chain: MVALRLIPCLDVANGRVVKGVNFVNLRDSGDPVELACRYSEAGADELVFLDIRASVENRKTLVDLVSRTAKSVKIPFTVGGGINSIVTINDLLRAGADKVSLNSSAVKNPKIISQSSKKFGTQCIVIAIDARKKHNVSNEWEVYVKGGRENTGLDVVNWAKKVEELGAGEILLTSMDGDGTQNGYDLLLTKTVAKAVNIPVIASGGAGSLEDIFDVFTEGEASAALLASLLHDKKLTIEEIKSFLINKKLIIRPNEK.

Catalysis depends on residues Asp11 and Asp130.

The protein belongs to the HisA/HisF family. As to quaternary structure, heterodimer of HisH and HisF.

Its subcellular location is the cytoplasm. It carries out the reaction 5-[(5-phospho-1-deoxy-D-ribulos-1-ylimino)methylamino]-1-(5-phospho-beta-D-ribosyl)imidazole-4-carboxamide + L-glutamine = D-erythro-1-(imidazol-4-yl)glycerol 3-phosphate + 5-amino-1-(5-phospho-beta-D-ribosyl)imidazole-4-carboxamide + L-glutamate + H(+). The protein operates within amino-acid biosynthesis; L-histidine biosynthesis; L-histidine from 5-phospho-alpha-D-ribose 1-diphosphate: step 5/9. In terms of biological role, IGPS catalyzes the conversion of PRFAR and glutamine to IGP, AICAR and glutamate. The HisF subunit catalyzes the cyclization activity that produces IGP and AICAR from PRFAR using the ammonia provided by the HisH subunit. This chain is Imidazole glycerol phosphate synthase subunit HisF, found in Prochlorococcus marinus (strain MIT 9515).